A 128-amino-acid polypeptide reads, in one-letter code: uncharacterized protein (128 aa).

This is an uncharacterized protein from Homo sapiens (Human).